We begin with the raw amino-acid sequence, 422 residues long: L-2-hydroxyglutarate dehydrogenase (422 aa).

This sequence belongs to the L2HGDH family. The cofactor is FAD.

The protein resides in the cell inner membrane. It catalyses the reaction (S)-2-hydroxyglutarate + a quinone = a quinol + 2-oxoglutarate. It participates in amino-acid degradation. In terms of biological role, catalyzes the dehydrogenation of L-2-hydroxyglutarate (L2HG) to alpha-ketoglutarate and couples to the respiratory chain by feeding electrons from the reaction into the membrane quinone pool. Functions in a L-lysine degradation pathway that proceeds via cadaverine, glutarate and L-2-hydroxyglutarate. The protein is L-2-hydroxyglutarate dehydrogenase of Escherichia coli (strain K12).